Here is a 171-residue protein sequence, read N- to C-terminus: Early E1A protein (171 aa).

The interaction with RB1 in competition with E2F1 stretch occupies residues 40–48 (PTLHDLFDV). The tract at residues 67 to 96 (DTDSSASTEGDSGFSPLSTPPVSPIPPHPT) is disordered. Positions 84–96 (STPPVSPIPPHPT) are enriched in pro residues. The LXCXE motif, interaction with host RB1 motif lies at 106-110 (LLCLE). A zinc finger lies at 145-163 (CLRCAFYQEQDDNALCGLC). The short motif at 166–171 (KGPCRR) is the Nuclear localization signal element.

It belongs to the adenoviridae E1A protein family. In terms of assembly, interacts with host UBE2I; this interaction interferes with polySUMOylation. Interacts with host RB1; this interaction induces the aberrant dissociation of RB1-E2F1 complex thereby disrupting the activity of RB1 and activating E2F1-regulated genes. Interacts with host ATF7; the interaction enhances ATF7-mediated viral transactivation activity which requires the zinc binding domains of both proteins. Isoform early E1A 32 kDa protein and isoform early E1A 26 kDa protein interact (via N-terminus) with CUL1 and E3 ubiquitin ligase RBX1; these interactions inhibit RBX1-CUL1-dependent elongation reaction of ubiquitin chains and attenuate ubiquitination of SCF(FBXW7) target proteins. Interacts (via PXLXP motif) with host ZMYND11/BS69 (via MYND-type zinc finger); this interaction inhibits E1A mediated transactivation. Interacts with host EP300; this interaction stimulates the acetylation of RB1 by recruiting EP300 and RB1 into a multimeric-protein complex. Interacts with host CTBP1 and CTBP2; this interaction seems to potentiate viral replication. Interacts with host DCAF7. Interacts with host DYRK1A. Interacts with host KPNA4; this interaction allows E1A import into the host nucleus. Interacts with host EP400; this interaction stabilizes MYC. Interacts with host TBP protein; this interaction probably disrupts the TBP-TATA complex.

It localises to the host nucleus. Its function is as follows. Plays a role in viral genome replication by driving entry of quiescent cells into the cell cycle. Stimulation of progression from G1 to S phase allows the virus to efficiently use the cellular DNA replicating machinery to achieve viral genome replication. E1A protein has both transforming and trans-activating activities. Induces the disassembly of the E2F1 transcription factor from RB1 by direct competition for the same binding site on RB1, with subsequent transcriptional activation of E2F1-regulated S-phase genes and of the E2 region of the adenoviral genome. Release of E2F1 leads to the ARF-mediated inhibition of MDM2 and causes TP53/p53 to accumulate because it is not targeted for degradation by MDM2-mediated ubiquitination anymore. This increase in TP53, in turn, would arrest the cell proliferation and direct its death but this effect is counteracted by the viral protein E1B-55K. Inactivation of the ability of RB1 to arrest the cell cycle is critical for cellular transformation, uncontrolled cellular growth and proliferation induced by viral infection. Interaction with RBX1 and CUL1 inhibits ubiquitination of the proteins targeted by SCF(FBXW7) ubiquitin ligase complex, and may be linked to unregulated host cell proliferation. The tumorigenesis-restraining activity of E1A may be related to the disruption of the host CtBP-CtIP complex through the CtBP binding motif. In Canis lupus familiaris (Dog), this protein is Early E1A protein.